We begin with the raw amino-acid sequence, 394 residues long: Queuine tRNA-ribosyltransferase (394 aa).

Asp95 acts as the Proton acceptor in catalysis. Residues 95 to 99, Asp149, Gln190, and Gly217 each bind substrate; that span reads DSGGF. Residues 248-254 form an RNA binding region; sequence GVGTPID. Asp267 acts as the Nucleophile in catalysis. An RNA binding; important for wobble base 34 recognition region spans residues 272-276; sequence TRNAR. Zn(2+)-binding residues include Cys305, Cys307, Cys310, and His337. A disordered region spans residues 375 to 394; that stretch reads NDANETVGATESTESTESTE.

Belongs to the queuine tRNA-ribosyltransferase family. As to quaternary structure, homodimer. Within each dimer, one monomer is responsible for RNA recognition and catalysis, while the other monomer binds to the replacement base PreQ1. The cofactor is Zn(2+).

It catalyses the reaction 7-aminomethyl-7-carbaguanine + guanosine(34) in tRNA = 7-aminomethyl-7-carbaguanosine(34) in tRNA + guanine. It functions in the pathway tRNA modification; tRNA-queuosine biosynthesis. In terms of biological role, catalyzes the base-exchange of a guanine (G) residue with the queuine precursor 7-aminomethyl-7-deazaguanine (PreQ1) at position 34 (anticodon wobble position) in tRNAs with GU(N) anticodons (tRNA-Asp, -Asn, -His and -Tyr). Catalysis occurs through a double-displacement mechanism. The nucleophile active site attacks the C1' of nucleotide 34 to detach the guanine base from the RNA, forming a covalent enzyme-RNA intermediate. The proton acceptor active site deprotonates the incoming PreQ1, allowing a nucleophilic attack on the C1' of the ribose to form the product. After dissociation, two additional enzymatic reactions on the tRNA convert PreQ1 to queuine (Q), resulting in the hypermodified nucleoside queuosine (7-(((4,5-cis-dihydroxy-2-cyclopenten-1-yl)amino)methyl)-7-deazaguanosine). The chain is Queuine tRNA-ribosyltransferase from Sorangium cellulosum (strain So ce56) (Polyangium cellulosum (strain So ce56)).